The primary structure comprises 738 residues: Polyribonucleotide nucleotidyltransferase (738 aa).

Residues D514 and D520 each coordinate Mg(2+). The region spanning 580–639 (PRIITVKIPVDKIGEVIGPKGKMINQIQEDTGAEITIEDDGTIYIGAQVGSQAEAARATI) is the KH domain. The S1 motif domain maps to 651–723 (GERYLGTVVK…SRGKLSLIPV (73 aa)).

This sequence belongs to the polyribonucleotide nucleotidyltransferase family. It depends on Mg(2+) as a cofactor.

Its subcellular location is the cytoplasm. It catalyses the reaction RNA(n+1) + phosphate = RNA(n) + a ribonucleoside 5'-diphosphate. Involved in mRNA degradation. Catalyzes the phosphorolysis of single-stranded polyribonucleotides processively in the 3'- to 5'-direction. This chain is Polyribonucleotide nucleotidyltransferase, found in Streptomyces avermitilis (strain ATCC 31267 / DSM 46492 / JCM 5070 / NBRC 14893 / NCIMB 12804 / NRRL 8165 / MA-4680).